Reading from the N-terminus, the 266-residue chain is Thiazole synthase (266 aa).

Lysine 107 (schiff-base intermediate with DXP) is an active-site residue. Residues glycine 168, 194–195, and 216–217 contribute to the 1-deoxy-D-xylulose 5-phosphate site; these read AG and NT.

The protein belongs to the ThiG family. In terms of assembly, homotetramer. Forms heterodimers with either ThiH or ThiS.

It is found in the cytoplasm. It carries out the reaction [ThiS sulfur-carrier protein]-C-terminal-Gly-aminoethanethioate + 2-iminoacetate + 1-deoxy-D-xylulose 5-phosphate = [ThiS sulfur-carrier protein]-C-terminal Gly-Gly + 2-[(2R,5Z)-2-carboxy-4-methylthiazol-5(2H)-ylidene]ethyl phosphate + 2 H2O + H(+). Its pathway is cofactor biosynthesis; thiamine diphosphate biosynthesis. In terms of biological role, catalyzes the rearrangement of 1-deoxy-D-xylulose 5-phosphate (DXP) to produce the thiazole phosphate moiety of thiamine. Sulfur is provided by the thiocarboxylate moiety of the carrier protein ThiS. In vitro, sulfur can be provided by H(2)S. This is Thiazole synthase from Azorhizobium caulinodans (strain ATCC 43989 / DSM 5975 / JCM 20966 / LMG 6465 / NBRC 14845 / NCIMB 13405 / ORS 571).